Here is a 278-residue protein sequence, read N- to C-terminus: Urease accessory protein UreD 1 (278 aa).

This sequence belongs to the UreD family. In terms of assembly, ureD, UreF and UreG form a complex that acts as a GTP-hydrolysis-dependent molecular chaperone, activating the urease apoprotein by helping to assemble the nickel containing metallocenter of UreC. The UreE protein probably delivers the nickel.

It is found in the cytoplasm. Functionally, required for maturation of urease via the functional incorporation of the urease nickel metallocenter. This Bradyrhizobium sp. (strain ORS 278) protein is Urease accessory protein UreD 1.